We begin with the raw amino-acid sequence, 62 residues long: Large ribosomal subunit protein bL28 (62 aa).

Positions 1–22 (MGKQCFVTGRKASTGNRRSHAL) are disordered.

This sequence belongs to the bacterial ribosomal protein bL28 family.

The chain is Large ribosomal subunit protein bL28 from Staphylococcus aureus (strain N315).